We begin with the raw amino-acid sequence, 720 residues long: Replication restart protein PriA (720 aa).

Positions 200-366 (ILMKNCFTSW…LHKKCFYIKF (167 aa)) constitute a Helicase ATP-binding domain. 213–220 (KNNFYLKV) provides a ligand contact to ATP. Positions 309–312 (NQEH) match the DEAH box motif. Zn(2+) contacts are provided by Cys-425, Cys-428, Cys-434, Cys-437, Cys-452, Cys-455, Cys-465, and Cys-468.

The protein belongs to the helicase family. PriA subfamily. As to quaternary structure, component of the replication restart primosome. Zn(2+) is required as a cofactor.

It carries out the reaction Couples ATP hydrolysis with the unwinding of duplex DNA by translocating in the 3'-5' direction.. The catalysed reaction is ATP + H2O = ADP + phosphate + H(+). Initiates the restart of stalled replication forks, which reloads the replicative helicase on sites other than the origin of replication. Recognizes and binds to abandoned replication forks and remodels them to uncover a helicase loading site. Promotes assembly of the primosome at these replication forks. The protein is Replication restart protein PriA of Buchnera aphidicola subsp. Schizaphis graminum (strain Sg).